A 101-amino-acid polypeptide reads, in one-letter code: MGIRYLLVLVLVLLVLGCEVQGAHMPQQDEATSSSLFTQMQESFYGYWGIAKSAVQGLYEKTYLTTMDEKIREIYNKSTAAVSTYAGIFTDQLLSMLKGDQ.

The first 22 residues, 1-22 (MGIRYLLVLVLVLLVLGCEVQG), serve as a signal peptide directing secretion. Positions 23–28 (AHMPQQ) are excised as a propeptide. The tract at residues 66–74 (TMDEKIREI) is lipid binding. Positions 78-101 (STAAVSTYAGIFTDQLLSMLKGDQ) are lipoprotein lipase cofactor.

Belongs to the apolipoprotein C2 family. In terms of processing, proapolipoprotein C-II is synthesized as a sialic acid containing glycoprotein which is subsequently desialylated prior to its proteolytic processing. Proapolipoprotein C-II, the major form found in plasma undergoes proteolytic cleavage of its N-terminal hexapeptide to generate apolipoprotein C-II, which occurs as the minor form in plasma.

The protein resides in the secreted. Component of chylomicrons, very low-density lipoproteins (VLDL), low-density lipoproteins (LDL), and high-density lipoproteins (HDL) in plasma. Plays an important role in lipoprotein metabolism as an activator of lipoprotein lipase. Both proapolipoprotein C-II and apolipoprotein C-II can activate lipoprotein lipase. In Neomonachus schauinslandi (Hawaiian monk seal), this protein is Apolipoprotein C-II (APOC2).